Consider the following 250-residue polypeptide: PF03932 family protein CutC (250 aa).

The protein belongs to the CutC family.

Its subcellular location is the cytoplasm. This Vibrio vulnificus (strain YJ016) protein is PF03932 family protein CutC.